Here is a 267-residue protein sequence, read N- to C-terminus: Undecaprenyl-diphosphatase (267 aa).

8 consecutive transmembrane segments (helical) span residues 1–21 (MSYFEAFMLALVQGFTEFLPI), 39–59 (QGLAFDVAVHVGTLAAVVIYF), 83–103 (AKLAWMIILATIPACIFGLLM), 111–131 (LRSAWVIATTTIIFGLLLWWV), 144–164 (AGWKKALFIGLAQAMAIIPGT), 189–209 (FLMSIPIITLAGGYLGLKLVT), 218–238 (TLLTGIVVSFISAYICIHFFL), and 246–266 (MTPFVIYRLILGFGLFAFLMM).

Belongs to the UppP family.

Its subcellular location is the cell inner membrane. It catalyses the reaction di-trans,octa-cis-undecaprenyl diphosphate + H2O = di-trans,octa-cis-undecaprenyl phosphate + phosphate + H(+). In terms of biological role, catalyzes the dephosphorylation of undecaprenyl diphosphate (UPP). Confers resistance to bacitracin. This chain is Undecaprenyl-diphosphatase, found in Vibrio atlanticus (strain LGP32) (Vibrio splendidus (strain Mel32)).